A 511-amino-acid polypeptide reads, in one-letter code: Cytochrome P450 71A6 (511 aa).

2 helical membrane-spanning segments follow: residues 1–15 (ILIALLCTLPFLFFL) and 61–77 (VMQLHFGSVPVLVASSP). Residues Asn90, Asn96, and Asn167 are each glycosylated (N-linked (GlcNAc...) asparagine). Cys450 serves as a coordination point for heme.

It belongs to the cytochrome P450 family. Requires heme as cofactor.

It localises to the membrane. In Nepeta racemosa (Catmint), this protein is Cytochrome P450 71A6 (CYP71A6).